A 159-amino-acid chain; its full sequence is LOB domain-containing protein 25 (159 aa).

Positions 38–139 (SPCAACKFLR…RELEETNADL (102 aa)) constitute an LOB domain.

It belongs to the LOB domain-containing protein family. In terms of tissue distribution, expressed in young shoots, roots, stems, leaves and flowers.

The chain is LOB domain-containing protein 25 (LBD25) from Arabidopsis thaliana (Mouse-ear cress).